Reading from the N-terminus, the 131-residue chain is Cytochrome c-552 (131 aa).

Heme c-binding residues include C11, C14, H15, and M69.

In terms of processing, binds 1 heme c group covalently per subunit.

In terms of biological role, this monoheme basic protein appears to function as an electron donor to cytochrome oxidase in T.thermophilus. The sequence is that of Cytochrome c-552 (cycA) from Thermus thermophilus.